Reading from the N-terminus, the 346-residue chain is RNA polymerase II holoenzyme cyclin-like subunit (346 aa).

Residues 59-158 enclose the Cyclin N-terminal domain; it reads NLLIKLGRRL…EMDSYLFLHH (100 aa).

The protein belongs to the cyclin family. Cyclin C subfamily. As to quaternary structure, component of the SRB8-11 complex, a regulatory module of the Mediator complex.

It localises to the nucleus. Component of the SRB8-11 complex. The SRB8-11 complex is a regulatory module of the Mediator complex which is itself involved in regulation of basal and activated RNA polymerase II-dependent transcription. The SRB8-11 complex may be involved in the transcriptional repression of a subset of genes regulated by Mediator. It may inhibit the association of the Mediator complex with RNA polymerase II to form the holoenzyme complex. The SRB8-11 complex phosphorylates the C-terminal domain (CTD) of the largest subunit of RNA polymerase II. This chain is RNA polymerase II holoenzyme cyclin-like subunit (SSN8), found in Scheffersomyces stipitis (strain ATCC 58785 / CBS 6054 / NBRC 10063 / NRRL Y-11545) (Yeast).